A 448-amino-acid chain; its full sequence is Adenylosuccinate synthetase (448 aa).

Residues 22–28 and 50–52 contribute to the GTP site; these read GDEGKGK and GHT. The active-site Proton acceptor is the D23. Mg(2+) contacts are provided by D23 and G50. Residues 23–26, 48–51, T139, R153, Q234, T249, and R321 each bind IMP; these read DEGK and NAGH. Catalysis depends on H51, which acts as the Proton donor. 317-323 lines the substrate pocket; it reads SVTGRPR. Residues R323, 349–351, and 431–433 contribute to the GTP site; these read KLD and STG.

It belongs to the adenylosuccinate synthetase family. In terms of assembly, homodimer. The cofactor is Mg(2+).

Its subcellular location is the cytoplasm. It catalyses the reaction IMP + L-aspartate + GTP = N(6)-(1,2-dicarboxyethyl)-AMP + GDP + phosphate + 2 H(+). Its pathway is purine metabolism; AMP biosynthesis via de novo pathway; AMP from IMP: step 1/2. Plays an important role in the de novo pathway of purine nucleotide biosynthesis. Catalyzes the first committed step in the biosynthesis of AMP from IMP. In Paraburkholderia phytofirmans (strain DSM 17436 / LMG 22146 / PsJN) (Burkholderia phytofirmans), this protein is Adenylosuccinate synthetase.